Consider the following 75-residue polypeptide: MTEKGYPSADAYEKELLSLLETVRYQAKQDTTLQIAERMLDYGVDVQLTAAVTGLTRDEILSGKRGKIPLQVKVK.

This is an uncharacterized protein from Halalkalibacterium halodurans (strain ATCC BAA-125 / DSM 18197 / FERM 7344 / JCM 9153 / C-125) (Bacillus halodurans).